A 337-amino-acid polypeptide reads, in one-letter code: Low-density lipoprotein receptor class A domain-containing protein 3 (337 aa).

Residues Met1–Ser13 form the signal peptide. Residues Gln14 to Thr169 are Extracellular-facing. N-linked (GlcNAc...) asparagine glycosylation occurs at Asn20. LDL-receptor class A domains follow at residues Glu24–Pro61, Arg66–Thr103, and Leu108–His144. Cystine bridges form between Cys25-Cys38, Cys33-Cys51, Cys45-Cys60, Cys67-Cys80, Cys74-Cys93, Cys87-Cys102, Cys109-Cys121, Cys116-Cys134, and Cys128-Cys143. The N-linked (GlcNAc...) asparagine glycan is linked to Asn101. The chain crosses the membrane as a helical span at residues Tyr170–Leu190. Residues His191–Val337 lie on the Cytoplasmic side of the membrane. The segment covering Gln243 to Ser253 has biased composition (polar residues). The tract at residues Gln243–Val337 is disordered. Low complexity predominate over residues Arg291–Thr303.

This sequence belongs to the LDLR family.

Its subcellular location is the cell membrane. The protein is Low-density lipoprotein receptor class A domain-containing protein 3 of Xenopus tropicalis (Western clawed frog).